Reading from the N-terminus, the 321-residue chain is Major immediate early protein (321 aa).

The RING-type zinc finger occupies 86–139; it reads CSVCLETYSQQSNDTCPFLIPTTCDHGFCFKCVINLQSNAMNIPHSTVCCPLCN. The segment at 228-249 is leucine-zipper; sequence LIEENTRLNEQIQELQHQVRTL.

Its subcellular location is the host nucleus. Plays some regulatory role in both viral DNA replication and transcriptional transactivation. This Lepidoptera (butterflies and moths) protein is Major immediate early protein (PE38).